A 311-amino-acid chain; its full sequence is MTLEHDRKGISIAVSAEVQAALDAGQPVVALESTVISHGLPYPHNLELALAMEQEVRDQGAVPATVGIVAGVPTVGMDAAAIRRFAHPDPHHPPLKVSRRDIGYVVAAGGDGATTVAATMALAHLAGVQVFATGGIGGVHRGARETWDVSADLTELERTPVLVVCAGAKAILDLPATLEYLETGGVPVLGWRTAEFPAFYSVSSGLPVAYAQDASFVARAWKAHRALGGAGMVLAVPPPVEDAIDRAVVEAAIERALNRAVKEGVHGPAVTPFLLAALARETEGESVRANVALLRQNARIAAQVATAIAGI.

The active-site Proton donor is the glutamate 32. Lysine 96 and valine 116 together coordinate substrate. Mn(2+) is bound at residue aspartate 148. Substrate is bound at residue 150 to 152 (SAD). The active-site Nucleophile is the lysine 169.

It belongs to the pseudouridine-5'-phosphate glycosidase family. In terms of assembly, homotrimer. Mn(2+) is required as a cofactor.

It catalyses the reaction D-ribose 5-phosphate + uracil = psi-UMP + H2O. Functionally, catalyzes the reversible cleavage of pseudouridine 5'-phosphate (PsiMP) to ribose 5-phosphate and uracil. Functions biologically in the cleavage direction, as part of a pseudouridine degradation pathway. The chain is Pseudouridine-5'-phosphate glycosidase from Roseiflexus sp. (strain RS-1).